An 845-amino-acid chain; its full sequence is Translation initiation factor IF-2 (845 aa).

The disordered stretch occupies residues M1–K260. The segment covering A68–P81 has biased composition (pro residues). Residues R101–A140 are compositionally biased toward basic and acidic residues. Low complexity-rich tracts occupy residues A141 to A166 and T173 to P191. The span at A194–R215 shows a compositional bias: basic and acidic residues. The region spanning P344–K514 is the tr-type G domain. Residues G353–T360 form a G1 region. A GTP-binding site is contributed by G353–T360. The G2 stretch occupies residues G378 to H382. Residues D400 to G403 are G3. GTP-binding positions include D400–H404 and N454–D457. The interval N454–D457 is G4. Positions S490–L492 are G5.

It belongs to the TRAFAC class translation factor GTPase superfamily. Classic translation factor GTPase family. IF-2 subfamily.

The protein localises to the cytoplasm. One of the essential components for the initiation of protein synthesis. Protects formylmethionyl-tRNA from spontaneous hydrolysis and promotes its binding to the 30S ribosomal subunits. Also involved in the hydrolysis of GTP during the formation of the 70S ribosomal complex. This Sphingopyxis alaskensis (strain DSM 13593 / LMG 18877 / RB2256) (Sphingomonas alaskensis) protein is Translation initiation factor IF-2.